Consider the following 616-residue polypeptide: Chaperone protein HscA (616 aa).

The protein belongs to the heat shock protein 70 family.

Chaperone involved in the maturation of iron-sulfur cluster-containing proteins. Has a low intrinsic ATPase activity which is markedly stimulated by HscB. Involved in the maturation of IscU. The chain is Chaperone protein HscA from Salmonella typhimurium (strain LT2 / SGSC1412 / ATCC 700720).